A 412-amino-acid chain; its full sequence is Subtilisin-like protease 6 (412 aa).

A signal peptide spans 1 to 20; that stretch reads MGFITKAIPIVLAALSTVNG. A propeptide spanning residues 21–126 is cleaved from the precursor; it reads AKILEAGPHA…VVRTSTNGTN (106 aa). The region spanning 36 to 120 is the Inhibitor I9 domain; it reads KYIVVMKREV…YIEPDFVVRT (85 aa). Residues N123 and N126 are each glycosylated (N-linked (GlcNAc...) asparagine). The region spanning 135–412 is the Peptidase S8 domain; sequence SWGLARVSSK…SKLIYNGSGK (278 aa). Residues D167 and H198 each act as charge relay system in the active site. N-linked (GlcNAc...) asparagine glycans are attached at residues N252 and N264. S358 functions as the Charge relay system in the catalytic mechanism. N408 is a glycosylation site (N-linked (GlcNAc...) asparagine).

Belongs to the peptidase S8 family.

The protein localises to the secreted. Secreted subtilisin-like serine protease with keratinolytic activity that contributes to pathogenicity. This chain is Subtilisin-like protease 6 (SUB6), found in Trichophyton equinum (Horse ringworm fungus).